We begin with the raw amino-acid sequence, 592 residues long: Membrane protein insertase YidC (592 aa).

The chain crosses the membrane as a helical span at residues 7–27; it reads NYFVAIALSVLILVAWQYFYV. The interval 38–74 is disordered; it reads AEKAQQTQQVQPQQGGQQPAPGQALPGGAVPGESRDQ. Positions 41 to 69 are enriched in low complexity; it reads AQQTQQVQPQQGGQQPAPGQALPGGAVPG. 4 helical membrane passes run 367 to 387, 441 to 461, 486 to 506, and 530 to 550; these read LFGN…LIFF, WPIL…YITI, LFGL…WPII, and FTWM…GLVI.

This sequence belongs to the OXA1/ALB3/YidC family. Type 1 subfamily. Interacts with the Sec translocase complex via SecD. Specifically interacts with transmembrane segments of nascent integral membrane proteins during membrane integration.

Its subcellular location is the cell inner membrane. Required for the insertion and/or proper folding and/or complex formation of integral membrane proteins into the membrane. Involved in integration of membrane proteins that insert both dependently and independently of the Sec translocase complex, as well as at least some lipoproteins. Aids folding of multispanning membrane proteins. The sequence is that of Membrane protein insertase YidC from Sinorhizobium fredii (strain NBRC 101917 / NGR234).